Here is a 427-residue protein sequence, read N- to C-terminus: MAYKEYRDKVLHFIEEHEKWRSHTINLIASENITSPSVNRAVASGFMHKYAEGWPRQRYYQGCKYVDEVELIGVELFTKLFKSDYADLRPISGTNANQAVFFGLGQPGDKVIVLHTSHGGHISHMPFGAAGMRGLEVHTWPFDNESFNIDVDKAEKMIRELEPKIVVFGGSLFPFPHPVKELAPVAKEVGAFVVYDAAHVLGLIAGGEFQDPLREGADIMTASTHKTFPGPQGGVILYKKFADDETIAKLQWAIFPGVLSNHHLHHMAGKVITAAEMLEYGEAYAKQIVKNAKALAEALAEEGFKVIGEDQGYTKSHQVIVDVSDLHPAGGGWAAPLLEEAGIILNKNLLPWDPLEKVNEPSGLRIGVQEMTRVGMMEDEMKEIAHFMKRVLLDKEDPKKVRKDVYYFRLEYQKVYYSFDYGLPMKE.

(6S)-5,6,7,8-tetrahydrofolate is bound at residue 120 to 122 (GHI). K226 bears the N6-(pyridoxal phosphate)lysine mark.

Belongs to the SHMT family. In terms of assembly, homodimer. The cofactor is pyridoxal 5'-phosphate.

The protein resides in the cytoplasm. The protein operates within amino-acid biosynthesis; glycine biosynthesis; glycine from L-serine: step 1/1. Functionally, catalyzes the reversible interconversion of serine and glycine with a modified folate serving as the one-carbon carrier. Also exhibits a pteridine-independent aldolase activity toward beta-hydroxyamino acids, producing glycine and aldehydes, via a retro-aldol mechanism. This Pyrococcus abyssi (strain GE5 / Orsay) protein is Serine hydroxymethyltransferase.